Here is a 462-residue protein sequence, read N- to C-terminus: Violaxanthin de-epoxidase, chloroplastic (462 aa).

Cys-231 and Cys-362 form a disulfide bridge. Positions 372-437 form a coiled coil; that stretch reads IEKTVEEGER…RELSKEEMEF (66 aa). The segment at 380–391 is involved in the binding to the thylakoid membrane; it reads ERIIVKEVEEIE.

This sequence belongs to the calycin superfamily. Lipocalin family. As to quaternary structure, interacts in vitro with LTO1.

The protein resides in the plastid. Its subcellular location is the chloroplast thylakoid membrane. It catalyses the reaction all-trans-violaxanthin + 2 L-ascorbate = all-trans-zeaxanthin + 2 L-dehydroascorbate + 2 H2O. With respect to regulation, activity limited by low ascorbate availability. Feedback inhibition by zeaxanthin. Requires the presence of micelle-forming lipids such as monogalactosyldiacylglyceride (MGDG). Low concentration of bilayer forming lipids, such as digalactosyldiacylglyceride (DGDG) or phosphatidylcholine, supports a slower but nearly complete activity. 80% of the specific activity in lumenal chloroplast fractions is lost in vitro in the presence of reduced thioredoxin. Part of the xanthophyll (or violaxanthin) cycle for controlling the concentration of zeaxanthin in chloroplasts. Catalyzes the two-step mono de-epoxidation reaction. Stereospecific for all-trans xanthophylls. Zeaxanthin induces the dissipation of excitation energy in the chlorophyll of the light-harvesting protein complex of photosystem II. This chain is Violaxanthin de-epoxidase, chloroplastic, found in Arabidopsis thaliana (Mouse-ear cress).